A 141-amino-acid polypeptide reads, in one-letter code: Nucleoside diphosphate kinase (141 aa).

Residues lysine 10, phenylalanine 58, arginine 86, threonine 92, arginine 103, and asparagine 113 each coordinate ATP. The Pros-phosphohistidine intermediate role is filled by histidine 116.

This sequence belongs to the NDK family. Homotetramer. It depends on Mg(2+) as a cofactor.

The protein resides in the cytoplasm. It carries out the reaction a 2'-deoxyribonucleoside 5'-diphosphate + ATP = a 2'-deoxyribonucleoside 5'-triphosphate + ADP. The catalysed reaction is a ribonucleoside 5'-diphosphate + ATP = a ribonucleoside 5'-triphosphate + ADP. Functionally, major role in the synthesis of nucleoside triphosphates other than ATP. The ATP gamma phosphate is transferred to the NDP beta phosphate via a ping-pong mechanism, using a phosphorylated active-site intermediate. The polypeptide is Nucleoside diphosphate kinase (Ehrlichia canis (strain Jake)).